Consider the following 208-residue polypeptide: Dephospho-CoA kinase (208 aa).

A DPCK domain is found at 3-208; it reads EIGLTGGIGS…ALSAAGVTQA (206 aa). An ATP-binding site is contributed by 11–16; it reads GSGKTR.

This sequence belongs to the CoaE family.

It localises to the cytoplasm. The enzyme catalyses 3'-dephospho-CoA + ATP = ADP + CoA + H(+). Its pathway is cofactor biosynthesis; coenzyme A biosynthesis; CoA from (R)-pantothenate: step 5/5. In terms of biological role, catalyzes the phosphorylation of the 3'-hydroxyl group of dephosphocoenzyme A to form coenzyme A. The polypeptide is Dephospho-CoA kinase (Cupriavidus pinatubonensis (strain JMP 134 / LMG 1197) (Cupriavidus necator (strain JMP 134))).